A 340-amino-acid polypeptide reads, in one-letter code: MARDLIGPALPPGFKARGTAEDEERDPSPVAGPALPPNYKSSSSDSSDSDEDSSSLYEEGNQESEEDDSGPTARKQRKNQDDDDDDDDGFFGPALPPGFKKQDDSPPRPIIGPALPPGFIKSTQKSDKGRDDPGQQETDSSEDEDIIGPMPAKGPVNYNVTTEFEKRAQRMKEKLTKGDDDSSKPIVRESWMTELPPEMKDFGLGPRTFKRRADDTSGDRSIWTDTPADRERKAKETQEARKSSSKKDEEHILSGRDKRLAEQVSSYNESKRSESLMDIHHKKLKSKAAEDKNKPQERIPFDRDKDLKVNRFDEAQKKALIKKSRELNTRFSHGKGNMFL.

A disordered region spans residues 1–304; that stretch reads MARDLIGPAL…PQERIPFDRD (304 aa). N-acetylalanine is present on alanine 2. Residues 7–12 carry the GPALPP motif 1 motif; sequence GPALPP. Position 28 is a phosphoserine (serine 28). The short motif at 32–37 is the GPALPP motif 2 element; the sequence is GPALPP. Acidic residues predominate over residues 60-69; it reads GNQESEEDDS. Positions 92–97 match the GPALPP motif 3 motif; that stretch reads GPALPP. The residue at position 105 (serine 105) is a Phosphoserine. Pro residues predominate over residues 107 to 116; sequence PRPIIGPALP. The GPALPP motif 4 signature appears at 112–117; that stretch reads GPALPP. Over residues 124–133 the composition is skewed to basic and acidic residues; it reads QKSDKGRDDP. Position 138 is a phosphothreonine (threonine 138). Serine 140 and serine 141 each carry phosphoserine. 4 stretches are compositionally biased toward basic and acidic residues: residues 163–187, 227–261, 269–279, and 287–304; these read EFEK…KPIV, PADR…KRLA, ESKRSESLMDI, and KAAE…FDRD. Lysine 271 participates in a covalent cross-link: Glycyl lysine isopeptide (Lys-Gly) (interchain with G-Cter in SUMO2). Residue lysine 308 forms a Glycyl lysine isopeptide (Lys-Gly) (interchain with G-Cter in SUMO2) linkage.

This chain is GPALPP motifs-containing protein 1 (GPALPP1), found in Homo sapiens (Human).